The sequence spans 118 residues: REPTOR-binding partner (118 aa).

The span at 1-20 shows a compositional bias: polar residues; it reads MADMEIQSNKMSITEETQVQ. The interval 1 to 53 is disordered; sequence MADMEIQSNKMSITEETQVQTRKECGKRGRKPGRKTSTEKLDMKAKLERSRQS. Residues 36-53 are compositionally biased toward basic and acidic residues; it reads TSTEKLDMKAKLERSRQS. The interval 40–77 is basic motif; sequence KLDMKAKLERSRQSARECRARKKLRYQYLEELVADREK. Residues 40–90 enclose the bZIP domain; that stretch reads KLDMKAKLERSRQSARECRARKKLRYQYLEELVADREKAVVALRTELERLI. The interval 82-89 is leucine-zipper; sequence LRTELERL.

It belongs to the bZIP family. ATF subfamily. Homodimer. Interacts (via C-terminus) with REPTOR (via C-terminus).

It is found in the nucleus. The protein localises to the chromosome. In terms of biological role, transcriptional regulator that acts in the TORC1 signaling pathway to regulate energy homeostasis and promote survival during nutrient deprivation. Interacts with REPTOR to form a transcriptional activator complex that functions downstream of TORC1 to up-regulate the expression of most target genes induced by TORC1 inhibition. In the complex, acts to enhance the binding of the transcriptional activator REPTOR to the regulatory sequences of target genes. Under normal conditions TORC1 is active, inhibiting the formation of the REPTOR/REPTOR-BP complex by phosphorylating REPTOR and mediates its cytoplasmic retention by forming a docking site for 14-3-3 proteins. Upon TORC1 inhibition resulting from nutrient stress, REPTOR is recruited into the nucleus where it interacts with REPTOR-BP and together they maintain organismal metabolism by activating the expression of target stress response genes including those involved in glycogenesis and triglyceride biosynthesis. The complex also appears to negatively regulate some aspects of TORC1-dependent larval growth. In Drosophila melanogaster (Fruit fly), this protein is REPTOR-binding partner.